Consider the following 243-residue polypeptide: Triosephosphate isomerase (243 aa).

Asn9 to Lys11 is a binding site for substrate. His96 (electrophile) is an active-site residue. Catalysis depends on Glu165, which acts as the Proton acceptor. Substrate is bound by residues Gly171, Ser204, and Gly225 to Gly226.

The protein belongs to the triosephosphate isomerase family. As to quaternary structure, homodimer.

The protein localises to the cytoplasm. The catalysed reaction is D-glyceraldehyde 3-phosphate = dihydroxyacetone phosphate. Its pathway is carbohydrate biosynthesis; gluconeogenesis. It participates in carbohydrate degradation; glycolysis; D-glyceraldehyde 3-phosphate from glycerone phosphate: step 1/1. Its function is as follows. Involved in the gluconeogenesis. Catalyzes stereospecifically the conversion of dihydroxyacetone phosphate (DHAP) to D-glyceraldehyde-3-phosphate (G3P). The sequence is that of Triosephosphate isomerase from Synechococcus sp. (strain CC9311).